A 657-amino-acid polypeptide reads, in one-letter code: Matrix metalloproteinase-15 (657 aa).

The signal sequence occupies residues 1–36 (MGSDRSALGRPGCTGSCLSSRASLLPLLLVLLDCLG). Positions 37–127 (HGTASKDAEV…KANLRRRRKR (91 aa)) are excised as a propeptide. The short motif at 105–112 (PRCGVPDQ) is the Cysteine switch element. Cys-107 contacts Zn(2+). Residues 128–614 (YTLTGKAWNN…MEEVVRTVNV (487 aa)) are Extracellular-facing. A glycan (N-linked (GlcNAc...) asparagine) is linked at Asn-146. Residue His-255 coordinates Zn(2+). Residue Glu-256 is part of the active site. His-259 and His-265 together coordinate Zn(2+). Residues 295–365 (IQQLYGSPDG…ERPDQYGPNI (71 aa)) are disordered. Pro residues predominate over residues 328–337 (PRPPQPPHPG). Hemopexin repeat units lie at residues 363–411 (PNIC…WRGL), 412–457 (PGNI…GTDI), 459–507 (YDRI…QGIP), and 508–555 (TSPK…FMGC). A disulfide bridge links Cys-366 with Cys-555. The N-linked (GlcNAc...) asparagine glycan is linked to Asn-414. Residues 561-599 (PRSRWPDVARPPFNPNGGAEPEADGDSKEENAGDKDEGS) form a disordered region. Residues 585–599 (GDSKEENAGDKDEGS) are compositionally biased toward basic and acidic residues. Residues 615–635 (VMVLVPLLLLLCILGLAFALV) form a helical membrane-spanning segment. Residues 636–657 (QMQRKGAPRMLLYCKRSLQEWV) are Cytoplasmic-facing.

This sequence belongs to the peptidase M10A family. Requires Zn(2+) as cofactor. The cofactor is Ca(2+). In terms of processing, the precursor is cleaved by a furin endopeptidase.

It localises to the membrane. In terms of biological role, endopeptidase that degrades various components of the extracellular matrix. May activate progelatinase A. The chain is Matrix metalloproteinase-15 (Mmp15) from Mus musculus (Mouse).